The primary structure comprises 146 residues: UPF0260 protein Swit_2819 (146 aa).

Belongs to the UPF0260 family.

The protein is UPF0260 protein Swit_2819 of Rhizorhabdus wittichii (strain DSM 6014 / CCUG 31198 / JCM 15750 / NBRC 105917 / EY 4224 / RW1) (Sphingomonas wittichii).